Here is a 601-residue protein sequence, read N- to C-terminus: Glutamine--fructose-6-phosphate aminotransferase [isomerizing] (601 aa).

The active-site Nucleophile; for GATase activity is the cysteine 2. Positions 2–216 constitute a Glutamine amidotransferase type-2 domain; sequence CGIVGYIGTN…DKEIVIVTKD (215 aa). 2 SIS domains span residues 282–421 and 453–591; these read IIDE…EIGD and IAGE…VDKP. Lysine 596 (for Fru-6P isomerization activity) is an active-site residue.

Homodimer.

The protein localises to the cytoplasm. It carries out the reaction D-fructose 6-phosphate + L-glutamine = D-glucosamine 6-phosphate + L-glutamate. Its function is as follows. Catalyzes the first step in hexosamine metabolism, converting fructose-6P into glucosamine-6P using glutamine as a nitrogen source. This is Glutamine--fructose-6-phosphate aminotransferase [isomerizing] from Listeria monocytogenes serovar 1/2a (strain ATCC BAA-679 / EGD-e).